The sequence spans 566 residues: Pentatricopeptide repeat-containing protein At4g11690 (566 aa).

13 PPR repeats span residues 93-127 (KFRLYEVIINSYVQSQSLNLSISYFNEMVDNGFVP), 128-158 (GSNCFNYLLTFVVGSSSFNQWWSFFNENKSK), 162-196 (DVYSFGILIKGCCEAGEIEKSFDLLIELTEFGFSP), 197-231 (NVVIYTTLIDGCCKKGEIEKAKDLFFEMGKLGLVA), 232-266 (NERTYTVLINGLFKNGVKKQGFEMYEKMQEDGVFP), 267-301 (NLYTYNCVMNQLCKDGRTKDAFQVFDEMRERGVSC), 302-336 (NIVTYNTLIGGLCREMKLNEANKVVDQMKSDGINP), 337-371 (NLITYNTLIDGFCGVGKLGKALSLCRDLKSRGLSP), 372-406 (SLVTYNILVSGFCRKGDTSGAAKMVKEMEERGIKP), 407-441 (SKVTYTILIDTFARSDNMEKAIQLRLSMEELGLVP), 442-476 (DVHTYSVLIHGFCIKGQMNEASRLFKSMVEKNCEP), 477-511 (NEVIYNTMILGYCKEGSSYRALKLLKEMEEKELAP), and 512-546 (NVASYRYMIEVLCKERKSKEAERLVEKMIDSGIDP).

Belongs to the PPR family. P subfamily.

In Arabidopsis thaliana (Mouse-ear cress), this protein is Pentatricopeptide repeat-containing protein At4g11690.